The sequence spans 277 residues: Protein OPG166 (277 aa).

Residues asparagine 29 and asparagine 58 are each glycosylated (N-linked (GlcNAc...) asparagine; by host). 5 consecutive transmembrane segments (helical) span residues 124–144 (TMLMFIFTGITLFLLFLEIAY), 156–176 (GILQVFGCVIAMIELCGAFLF), 186–206 (IIGLLMMTLPSIFLIITKVFS), 219–239 (LIIYYQLAGYILTVLGLGLSL), and 247–267 (LLLSGLGTIMVSEHFGLLFLV).

Belongs to the orthopoxvirus OPG166 protein family.

The protein resides in the host membrane. Functionally, promotes, when overexpressed, the influx of extracellular Ca(2+), leading to membrane permeability and host cell necrosis. The polypeptide is Protein OPG166 (OPG166) (Cynomys gunnisoni (Gunnison's prairie dog)).